A 253-amino-acid chain; its full sequence is Protein C1orf43 homolog (253 aa).

Residues 11–31 (VNVVLVMAYGSLVFVLLFIFV) traverse the membrane as a helical segment. The tract at residues 194-213 (SGSSQRQHQSAAKDLTQSPE) is disordered.

Its subcellular location is the membrane. It localises to the golgi apparatus. It is found in the mitochondrion. General regulator of phagocytosis. Required to uptake Gram negative bacterium by macrophages. The sequence is that of Protein C1orf43 homolog from Bos taurus (Bovine).